The following is a 377-amino-acid chain: Succinyl-diaminopimelate desuccinylase (377 aa).

Zn(2+) is bound at residue histidine 68. Residue aspartate 70 is part of the active site. Residue aspartate 101 coordinates Zn(2+). Catalysis depends on glutamate 135, which acts as the Proton acceptor. Zn(2+) contacts are provided by glutamate 136, glutamate 164, and histidine 350.

Belongs to the peptidase M20A family. DapE subfamily. In terms of assembly, homodimer. Requires Zn(2+) as cofactor. Co(2+) is required as a cofactor.

The enzyme catalyses N-succinyl-(2S,6S)-2,6-diaminopimelate + H2O = (2S,6S)-2,6-diaminopimelate + succinate. The protein operates within amino-acid biosynthesis; L-lysine biosynthesis via DAP pathway; LL-2,6-diaminopimelate from (S)-tetrahydrodipicolinate (succinylase route): step 3/3. Its function is as follows. Catalyzes the hydrolysis of N-succinyl-L,L-diaminopimelic acid (SDAP), forming succinate and LL-2,6-diaminopimelate (DAP), an intermediate involved in the bacterial biosynthesis of lysine and meso-diaminopimelic acid, an essential component of bacterial cell walls. The protein is Succinyl-diaminopimelate desuccinylase of Acinetobacter baylyi (strain ATCC 33305 / BD413 / ADP1).